The following is a 337-amino-acid chain: Inositol 2-dehydrogenase (337 aa).

This sequence belongs to the Gfo/Idh/MocA family. As to quaternary structure, homotetramer.

The enzyme catalyses myo-inositol + NAD(+) = scyllo-inosose + NADH + H(+). Involved in the oxidation of myo-inositol (MI) to 2-keto-myo-inositol (2KMI or 2-inosose). The polypeptide is Inositol 2-dehydrogenase (Burkholderia lata (strain ATCC 17760 / DSM 23089 / LMG 22485 / NCIMB 9086 / R18194 / 383)).